We begin with the raw amino-acid sequence, 289 residues long: NADPH-dependent 7-cyano-7-deazaguanine reductase (289 aa).

I81–S83 contributes to the substrate binding site. S83–K84 serves as a coordination point for NADPH. The active-site Thioimide intermediate is C196. Catalysis depends on D203, which acts as the Proton donor. Substrate is bound at residue H235–E236. R264–G265 is a binding site for NADPH.

The protein belongs to the GTP cyclohydrolase I family. QueF type 2 subfamily. As to quaternary structure, homodimer.

Its subcellular location is the cytoplasm. The catalysed reaction is 7-aminomethyl-7-carbaguanine + 2 NADP(+) = 7-cyano-7-deazaguanine + 2 NADPH + 3 H(+). It participates in tRNA modification; tRNA-queuosine biosynthesis. Catalyzes the NADPH-dependent reduction of 7-cyano-7-deazaguanine (preQ0) to 7-aminomethyl-7-deazaguanine (preQ1). The polypeptide is NADPH-dependent 7-cyano-7-deazaguanine reductase (Albidiferax ferrireducens (strain ATCC BAA-621 / DSM 15236 / T118) (Rhodoferax ferrireducens)).